A 167-amino-acid chain; its full sequence is Leukotoxin-activating lysine-acyltransferase LktC serotype A11 (167 aa).

Catalysis depends on residues His-22 and Asp-91.

This sequence belongs to the RTX toxin acyltransferase family.

Its subcellular location is the cytoplasm. It catalyses the reaction a fatty acyl-[ACP] + L-lysyl-[protein] = N(6)-(fatty acyl)-L-lysyl-[protein] + holo-[ACP] + H(+). Its function is as follows. Involved in fatty acylation of the protoxin (LktA) at two internal lysine residues, thereby converting it to the active toxin. This chain is Leukotoxin-activating lysine-acyltransferase LktC serotype A11 (lktC), found in Mannheimia haemolytica (Pasteurella haemolytica).